The following is a 339-amino-acid chain: Ketol-acid reductoisomerase (NADP(+)) (339 aa).

Residues 1-182 (MRVYYDRDAD…GGGRAGIIET (182 aa)) form the KARI N-terminal Rossmann domain. NADP(+)-binding positions include 24–27 (YGSQ), arginine 48, serine 51, threonine 53, and 83–86 (DELQ). The active site involves histidine 108. Glycine 134 is a binding site for NADP(+). A KARI C-terminal knotted domain is found at 183-328 (TFKEECETDL…AKLRGMMPWI (146 aa)). Residues aspartate 191, glutamate 195, glutamate 227, and glutamate 231 each coordinate Mg(2+). Residue serine 252 participates in substrate binding.

The protein belongs to the ketol-acid reductoisomerase family. Requires Mg(2+) as cofactor.

It carries out the reaction (2R)-2,3-dihydroxy-3-methylbutanoate + NADP(+) = (2S)-2-acetolactate + NADPH + H(+). The enzyme catalyses (2R,3R)-2,3-dihydroxy-3-methylpentanoate + NADP(+) = (S)-2-ethyl-2-hydroxy-3-oxobutanoate + NADPH + H(+). It functions in the pathway amino-acid biosynthesis; L-isoleucine biosynthesis; L-isoleucine from 2-oxobutanoate: step 2/4. Its pathway is amino-acid biosynthesis; L-valine biosynthesis; L-valine from pyruvate: step 2/4. Involved in the biosynthesis of branched-chain amino acids (BCAA). Catalyzes an alkyl-migration followed by a ketol-acid reduction of (S)-2-acetolactate (S2AL) to yield (R)-2,3-dihydroxy-isovalerate. In the isomerase reaction, S2AL is rearranged via a Mg-dependent methyl migration to produce 3-hydroxy-3-methyl-2-ketobutyrate (HMKB). In the reductase reaction, this 2-ketoacid undergoes a metal-dependent reduction by NADPH to yield (R)-2,3-dihydroxy-isovalerate. The protein is Ketol-acid reductoisomerase (NADP(+)) of Methylorubrum extorquens (strain CM4 / NCIMB 13688) (Methylobacterium extorquens).